Here is a 729-residue protein sequence, read N- to C-terminus: Catalase-peroxidase 1 (729 aa).

The segment at residues 98–226 is a cross-link (tryptophyl-tyrosyl-methioninium (Trp-Tyr) (with M-252)); that stretch reads WHSAGSYRIA…LAAVMMGLIY (129 aa). His99 serves as the catalytic Proton acceptor. The tryptophyl-tyrosyl-methioninium (Tyr-Met) (with W-98) cross-link spans 226–252; that stretch reads YVNPEGVDGNPDPLRTAKDIRETFARM. Residue His267 coordinates heme b.

The protein belongs to the peroxidase family. Peroxidase/catalase subfamily. Homodimer or homotetramer. Heme b is required as a cofactor. Formation of the three residue Trp-Tyr-Met cross-link is important for the catalase, but not the peroxidase activity of the enzyme.

It carries out the reaction H2O2 + AH2 = A + 2 H2O. It catalyses the reaction 2 H2O2 = O2 + 2 H2O. Bifunctional enzyme with both catalase and broad-spectrum peroxidase activity. In Cellvibrio japonicus (strain Ueda107) (Pseudomonas fluorescens subsp. cellulosa), this protein is Catalase-peroxidase 1.